The sequence spans 1375 residues: DNA-directed RNA polymerase subunit beta (1375 aa).

The protein belongs to the RNA polymerase beta chain family. The RNAP catalytic core consists of 2 alpha, 1 beta, 1 beta' and 1 omega subunit. When a sigma factor is associated with the core the holoenzyme is formed, which can initiate transcription.

The catalysed reaction is RNA(n) + a ribonucleoside 5'-triphosphate = RNA(n+1) + diphosphate. Functionally, DNA-dependent RNA polymerase catalyzes the transcription of DNA into RNA using the four ribonucleoside triphosphates as substrates. In Campylobacter jejuni subsp. jejuni serotype O:6 (strain 81116 / NCTC 11828), this protein is DNA-directed RNA polymerase subunit beta.